The following is a 377-amino-acid chain: Palmitoyltransferase ZDHHC16 (377 aa).

Topologically, residues 1 to 79 are cytoplasmic; the sequence is MRGQWSLLLG…WLVDNVIRWC (79 aa). Residues 80 to 100 traverse the membrane as a helical segment; sequence GVVFVVLVIVLTSSIVAIAYL. Over 101-116 the chain is Lumenal; that stretch reads CVLPLILQTYSVPRLC. Residues 117–137 form a helical membrane-spanning segment; it reads WHFFYSHWNLILIVFHYYQAI. Residues 138 to 198 are Cytoplasmic-facing; that stretch reads TTPPGYPPQG…NNCVGHYNHR (61 aa). The DHHC domain maps to 155 to 205; the sequence is SICKKCINPKPARTHHCSICNRCVLKMDHHCPWLNNCVGHYNHRYFFSFCF. Catalysis depends on C185, which acts as the S-palmitoyl cysteine intermediate. A helical membrane pass occupies residues 199–219; the sequence is YFFSFCFFMTLGCVYCSYGSW. Over 220–266 the chain is Lumenal; the sequence is DLFREAYAAIEKMKQLDKNKLQAVANQTYHQTPPPTFSFRERVTHKS. The chain crosses the membrane as a helical span at residues 267-287; sequence LVYLWFLCSSVALALGALTIW. The Cytoplasmic segment spans residues 288-377; the sequence is HAVLISRGET…TAHSASVMAV (90 aa).

Belongs to the DHHC palmitoyltransferase family. In terms of assembly, interacts with ABL1. Interacts with COPS5/JAB1.

The protein resides in the endoplasmic reticulum membrane. It carries out the reaction L-cysteinyl-[protein] + hexadecanoyl-CoA = S-hexadecanoyl-L-cysteinyl-[protein] + CoA. Palmitoyl acyltransferase that mediates palmitoylation of proteins such as PLN and ZDHHC6. Required during embryonic heart development and cardiac function, possibly by mediating palmitoylation of PLN, thereby affecting PLN phosphorylation and homooligomerization. Also required for eye development. Palmitoylates ZDHHC6, affecting the quaternary assembly of ZDHHC6, its localization, stability and function. May play a role in DNA damage response. May be involved in apoptosis regulation. Involved in the proliferation of neural stem cells by regulating the FGF/ERK pathway. This chain is Palmitoyltransferase ZDHHC16, found in Bos taurus (Bovine).